We begin with the raw amino-acid sequence, 144 residues long: Maximins z/Hv (144 aa).

The first 18 residues, 1-18 (MNFKYIVAVSFLIASGYA), serve as a signal peptide directing secretion. The propeptide occupies 19–43 (RSEENDVQSLSQREVLEEESLREIR). An Asparagine amide modification is found at Asn70. A propeptide spanning residues 74-123 (TAEDHEVMKRLKAVMRDLDSLDHPEEASERETRGFNQEEIANLFTKKEKR) is cleaved from the precursor. Isoleucine amide is present on Ile143.

It belongs to the bombinin family. As to expression, expressed by the skin glands.

The protein resides in the secreted. Its function is as follows. Maximin-z shows antimicrobial activity against bacteria and against the fungus C.albicans. It has little hemolytic activity. In terms of biological role, maximin-Hv shows antimicrobial activity against bacteria and against the fungus C.albicans. Shows strong hemolytic activity. This Bombina maxima (Giant fire-bellied toad) protein is Maximins z/Hv.